We begin with the raw amino-acid sequence, 331 residues long: Ribosomal RNA small subunit methyltransferase H (331 aa).

Residues Gly-56 to His-58, Asp-76, Phe-100, Asp-122, and Gln-129 contribute to the S-adenosyl-L-methionine site.

Belongs to the methyltransferase superfamily. RsmH family.

It is found in the cytoplasm. The catalysed reaction is cytidine(1402) in 16S rRNA + S-adenosyl-L-methionine = N(4)-methylcytidine(1402) in 16S rRNA + S-adenosyl-L-homocysteine + H(+). Specifically methylates the N4 position of cytidine in position 1402 (C1402) of 16S rRNA. The chain is Ribosomal RNA small subunit methyltransferase H from Chromohalobacter salexigens (strain ATCC BAA-138 / DSM 3043 / CIP 106854 / NCIMB 13768 / 1H11).